The following is a 423-amino-acid chain: L-cysteine:1D-myo-inositol 2-amino-2-deoxy-alpha-D-glucopyranoside ligase (423 aa).

Cys43 is a Zn(2+) binding site. L-cysteinyl-5'-AMP-binding positions include 43–46, Thr58, and 81–83; these read CGIT and NVT. The 'HIGH' region motif lies at 45–55; the sequence is ITPYDATHMGH. Residues 199 to 204 carry the 'ERGGDP' region motif; it reads ERGGDP. Trp240 is a binding site for L-cysteinyl-5'-AMP. Residue Cys244 participates in Zn(2+) binding. 262–264 lines the L-cysteinyl-5'-AMP pocket; sequence GSD. Position 269 (His269) interacts with Zn(2+). Val295 serves as a coordination point for L-cysteinyl-5'-AMP. The 'KMSKS' region motif lies at 301-305; the sequence is KMSKS.

The protein belongs to the class-I aminoacyl-tRNA synthetase family. MshC subfamily. As to quaternary structure, monomer. Requires Zn(2+) as cofactor.

The catalysed reaction is 1D-myo-inositol 2-amino-2-deoxy-alpha-D-glucopyranoside + L-cysteine + ATP = 1D-myo-inositol 2-(L-cysteinylamino)-2-deoxy-alpha-D-glucopyranoside + AMP + diphosphate + H(+). Catalyzes the ATP-dependent condensation of GlcN-Ins and L-cysteine to form L-Cys-GlcN-Ins. In Renibacterium salmoninarum (strain ATCC 33209 / DSM 20767 / JCM 11484 / NBRC 15589 / NCIMB 2235), this protein is L-cysteine:1D-myo-inositol 2-amino-2-deoxy-alpha-D-glucopyranoside ligase.